A 232-amino-acid chain; its full sequence is MKIGIIGAMEEEVTLLRDKIDNRQTITLGGCEIYTGQLNGTEVALLKSGIGKVAAALGATLLLEHCKPDVIINTGSAGGLASTLKVGDIVVSDEARYHDADVTAFGYEYGQLPGCPAGFKADDKLIAAAESCIRELNLNAVRGLIVSGDAFINGSVGLAKIRHNFPDAVAVEMEATAIAHVCHNFNVPFVVVRAISDVADQQSHLSFDEFLAVAAKQSTLMVETLVQKLAHG.

E12 (proton acceptor) is an active-site residue. Residues G78, I152, and 173 to 174 (ME) contribute to the substrate site. The Proton donor role is filled by D197.

Belongs to the PNP/UDP phosphorylase family. MtnN subfamily. As to quaternary structure, homodimer.

It carries out the reaction S-adenosyl-L-homocysteine + H2O = S-(5-deoxy-D-ribos-5-yl)-L-homocysteine + adenine. It catalyses the reaction S-methyl-5'-thioadenosine + H2O = 5-(methylsulfanyl)-D-ribose + adenine. The enzyme catalyses 5'-deoxyadenosine + H2O = 5-deoxy-D-ribose + adenine. It participates in amino-acid biosynthesis; L-methionine biosynthesis via salvage pathway; S-methyl-5-thio-alpha-D-ribose 1-phosphate from S-methyl-5'-thioadenosine (hydrolase route): step 1/2. Functionally, catalyzes the irreversible cleavage of the glycosidic bond in both 5'-methylthioadenosine (MTA) and S-adenosylhomocysteine (SAH/AdoHcy) to adenine and the corresponding thioribose, 5'-methylthioribose and S-ribosylhomocysteine, respectively. Also cleaves 5'-deoxyadenosine, a toxic by-product of radical S-adenosylmethionine (SAM) enzymes, into 5-deoxyribose and adenine. Thus, is required for in vivo function of the radical SAM enzymes biotin synthase and lipoic acid synthase, that are inhibited by 5'-deoxyadenosine accumulation. This Salmonella paratyphi B (strain ATCC BAA-1250 / SPB7) protein is 5'-methylthioadenosine/S-adenosylhomocysteine nucleosidase.